Reading from the N-terminus, the 71-residue chain is Translation initiation factor IF-1 (71 aa).

In terms of domain architecture, S1-like spans M1–H71.

It belongs to the IF-1 family. In terms of assembly, component of the 30S ribosomal translation pre-initiation complex which assembles on the 30S ribosome in the order IF-2 and IF-3, IF-1 and N-formylmethionyl-tRNA(fMet); mRNA recruitment can occur at any time during PIC assembly.

It is found in the cytoplasm. Its function is as follows. One of the essential components for the initiation of protein synthesis. Stabilizes the binding of IF-2 and IF-3 on the 30S subunit to which N-formylmethionyl-tRNA(fMet) subsequently binds. Helps modulate mRNA selection, yielding the 30S pre-initiation complex (PIC). Upon addition of the 50S ribosomal subunit IF-1, IF-2 and IF-3 are released leaving the mature 70S translation initiation complex. The sequence is that of Translation initiation factor IF-1 from Rickettsia typhi (strain ATCC VR-144 / Wilmington).